The following is a 129-amino-acid chain: Small ribosomal subunit protein uS11 (129 aa).

The interval 108–129 is disordered; it reads EDVTPIPHDGTKPKGGKRGRRV.

The protein belongs to the universal ribosomal protein uS11 family. Part of the 30S ribosomal subunit.

In terms of biological role, located on the platform of the 30S subunit. The chain is Small ribosomal subunit protein uS11 from Methanothrix thermoacetophila (strain DSM 6194 / JCM 14653 / NBRC 101360 / PT) (Methanosaeta thermophila).